The primary structure comprises 203 residues: Synaptosomal-associated protein 25-B (203 aa).

Over residues 1-11 (MADEADMRNEL) the composition is skewed to basic and acidic residues. Residues 1-25 (MADEADMRNELTDMQARADQLGDES) form a disordered region. T-SNARE coiled-coil homology domains follow at residues 19-81 (DQLG…LTDL) and 137-199 (DARE…ATKM).

The protein belongs to the SNAP-25 family.

The protein resides in the synapse. The protein localises to the synaptosome. Its subcellular location is the cell membrane. Functionally, may play an important role in the synaptic function of specific neuronal systems. Associates with proteins involved in vesicle docking and membrane fusion. In Carassius auratus (Goldfish), this protein is Synaptosomal-associated protein 25-B (snap25b).